An 863-amino-acid chain; its full sequence is Ubiquitin carboxyl-terminal hydrolase 13 (863 aa).

The residue at position 114 (serine 114) is a Phosphoserine; by AURKB. The residue at position 122 (threonine 122) is a Phosphothreonine. The UBP-type; degenerate zinc-finger motif lies at proline 187–methionine 295. Zn(2+) is bound by residues cysteine 211, cysteine 214, cysteine 231, and histidine 244. Lysine 311 participates in a covalent cross-link: Glycyl lysine isopeptide (Lys-Gly) (interchain with G-Cter in SUMO2). The 526-residue stretch at threonine 336–isoleucine 861 folds into the USP domain. The active-site Nucleophile is the cysteine 345. Residue lysine 405 forms a Glycyl lysine isopeptide (Lys-Gly) (interchain with G-Cter in SUMO2) linkage. 2 UBA domains span residues aspartate 652 to histidine 693 and glutamine 727 to histidine 767. The active-site Proton acceptor is the histidine 823.

This sequence belongs to the peptidase C19 family. Interacts with UFD1. Interacts (via UBA domains) with SIAH2 (when ubiquitinated). Interacts with BAG6; the interaction is direct and may mediate UBL4A deubiquitination. Interacts (via UBA 2 domain) with AMFR; the interaction is direct. Interacts with UBL4A; may be indirect via BAG6. Interacts with NEDD4. Phosphorylated by AURKB at Ser-114; leading to stabilization of cell cycle proteins such as SKP2 and AURKB, but not MCL1. In terms of tissue distribution, highly expressed in ovary and testes.

It is found in the cytoplasm. It catalyses the reaction Thiol-dependent hydrolysis of ester, thioester, amide, peptide and isopeptide bonds formed by the C-terminal Gly of ubiquitin (a 76-residue protein attached to proteins as an intracellular targeting signal).. Specifically inhibited by spautin-1 (specific and potent autophagy inhibitor-1), a derivative of MBCQ that binds to USP13 and inhibits deubiquitinase activity. Regulated by PIK3C3/VPS34-containing complexes. The weak deubiquitinase activity in vitro suggests the existence of some mechanism that activates the enzyme. In terms of biological role, deubiquitinase that mediates deubiquitination of target proteins such as BECN1, MITF, SKP2 and USP10 and is involved in various processes such as autophagy, endoplasmic reticulum-associated degradation (ERAD), cell cycle progression or DNA damage response. Component of a regulatory loop that controls autophagy and p53/TP53 levels: mediates deubiquitination of BECN1, a key regulator of autophagy, leading to stabilize the PIK3C3/VPS34-containing complexes. Alternatively, forms with NEDD4 a deubiquitination complex, which subsequently stabilizes VPS34 to promote autophagy. Also deubiquitinates USP10, an essential regulator of p53/TP53 stability. In turn, PIK3C3/VPS34-containing complexes regulate USP13 stability, suggesting the existence of a regulatory system by which PIK3C3/VPS34-containing complexes regulate p53/TP53 protein levels via USP10 and USP13. Recruited by nuclear UFD1 and mediates deubiquitination of SKP2, thereby regulating endoplasmic reticulum-associated degradation (ERAD). Also regulates ERAD through the deubiquitination of UBL4A a component of the BAG6/BAT3 complex. Mediates stabilization of SIAH2 independently of deubiquitinase activity: binds ubiquitinated SIAH2 and acts by impairing SIAH2 autoubiquitination. Regulates the cell cycle progression by stabilizing cell cycle proteins such as SKP2 and AURKB. In addition, plays an important role in maintaining genomic stability and in DNA replication checkpoint activation via regulation of RAP80 and TOPBP1. Deubiquitinates the multifunctional protein HMGB1 and subsequently drives its nucleocytoplasmic localization and its secretion. Positively regulates type I and type II interferon signalings by deubiquitinating STAT1 but negatively regulates antiviral response by deubiquitinating STING1. In Homo sapiens (Human), this protein is Ubiquitin carboxyl-terminal hydrolase 13 (USP13).